The primary structure comprises 388 residues: Phosphoglycerate kinase (388 aa).

Substrate-binding positions include 21-23 (DLN), Arg-36, 59-62 (HLGR), Arg-114, and Arg-147. ATP contacts are provided by residues Lys-198, Glu-315, and 341-344 (GGDT).

It belongs to the phosphoglycerate kinase family. In terms of assembly, monomer.

The protein localises to the cytoplasm. It catalyses the reaction (2R)-3-phosphoglycerate + ATP = (2R)-3-phospho-glyceroyl phosphate + ADP. Its pathway is carbohydrate degradation; glycolysis; pyruvate from D-glyceraldehyde 3-phosphate: step 2/5. The chain is Phosphoglycerate kinase from Buchnera aphidicola subsp. Schizaphis graminum (strain Sg).